The sequence spans 406 residues: Aspartokinase (406 aa).

An ACT domain is found at 342–406; that stretch reads IIGHGIKNDL…LLKISETGHC (65 aa).

The protein belongs to the aspartokinase family.

The catalysed reaction is L-aspartate + ATP = 4-phospho-L-aspartate + ADP. The protein operates within amino-acid biosynthesis; L-lysine biosynthesis via DAP pathway; (S)-tetrahydrodipicolinate from L-aspartate: step 1/4. Its pathway is amino-acid biosynthesis; L-methionine biosynthesis via de novo pathway; L-homoserine from L-aspartate: step 1/3. It functions in the pathway amino-acid biosynthesis; L-threonine biosynthesis; L-threonine from L-aspartate: step 1/5. In Rickettsia bellii (strain RML369-C), this protein is Aspartokinase (lysC).